The following is a 166-amino-acid chain: MFPMVTEFMNYGQQTVRAARYIGQGFMITLSHANRLPVTIQYPYEKLITSERFRGRIHFEFDKCIACEVCVRVCPIDLPVVDWKLETDIRKKRLLNYSIDFGICIFCGNCVEYCPTNCLSMTEEYELSTYDRHELNYNQIALGRLPMSIIDDYTIRTIFNLPEIKT.

2 consecutive 4Fe-4S ferredoxin-type domains span residues 55–84 (GRIH…VDWK) and 95–124 (LNYS…MTEE). C64, C67, C70, C74, C104, C107, C110, and C114 together coordinate [4Fe-4S] cluster.

This sequence belongs to the complex I 23 kDa subunit family. NDH is composed of at least 16 different subunits, 5 of which are encoded in the nucleus. [4Fe-4S] cluster serves as cofactor.

The protein localises to the plastid. It is found in the chloroplast thylakoid membrane. It catalyses the reaction a plastoquinone + NADH + (n+1) H(+)(in) = a plastoquinol + NAD(+) + n H(+)(out). It carries out the reaction a plastoquinone + NADPH + (n+1) H(+)(in) = a plastoquinol + NADP(+) + n H(+)(out). Its function is as follows. NDH shuttles electrons from NAD(P)H:plastoquinone, via FMN and iron-sulfur (Fe-S) centers, to quinones in the photosynthetic chain and possibly in a chloroplast respiratory chain. The immediate electron acceptor for the enzyme in this species is believed to be plastoquinone. Couples the redox reaction to proton translocation, and thus conserves the redox energy in a proton gradient. In Oteiza scandens (Climbing oteiza), this protein is NAD(P)H-quinone oxidoreductase subunit I, chloroplastic.